The following is a 545-amino-acid chain: CTP synthase (545 aa).

The segment at Met-1 to Leu-266 is amidoligase domain. A CTP-binding site is contributed by Ser-14. UTP is bound at residue Ser-14. ATP is bound by residues Ser-15–Ile-20 and Asp-72. Mg(2+) is bound by residues Asp-72 and Glu-140. CTP contacts are provided by residues Asp-147–Glu-149, Lys-187–Gln-192, and Lys-223. Residues Lys-187–Gln-192 and Lys-223 contribute to the UTP site. Lys-239 to Val-241 provides a ligand contact to ATP. One can recognise a Glutamine amidotransferase type-1 domain in the interval Thr-291–Lys-542. Gly-352 contributes to the L-glutamine binding site. The Nucleophile; for glutamine hydrolysis role is filled by Cys-379. Residues Leu-380–Gln-383, Glu-403, and Arg-470 each bind L-glutamine. Residues His-515 and Glu-517 contribute to the active site.

This sequence belongs to the CTP synthase family. As to quaternary structure, homotetramer.

It catalyses the reaction UTP + L-glutamine + ATP + H2O = CTP + L-glutamate + ADP + phosphate + 2 H(+). The catalysed reaction is L-glutamine + H2O = L-glutamate + NH4(+). It carries out the reaction UTP + NH4(+) + ATP = CTP + ADP + phosphate + 2 H(+). It participates in pyrimidine metabolism; CTP biosynthesis via de novo pathway; CTP from UDP: step 2/2. With respect to regulation, allosterically activated by GTP, when glutamine is the substrate; GTP has no effect on the reaction when ammonia is the substrate. The allosteric effector GTP functions by stabilizing the protein conformation that binds the tetrahedral intermediate(s) formed during glutamine hydrolysis. Inhibited by the product CTP, via allosteric rather than competitive inhibition. Catalyzes the ATP-dependent amination of UTP to CTP with either L-glutamine or ammonia as the source of nitrogen. Regulates intracellular CTP levels through interactions with the four ribonucleotide triphosphates. This Haemophilus influenzae (strain PittGG) protein is CTP synthase.